The following is a 281-amino-acid chain: Probable endonuclease 4 (281 aa).

Zn(2+) contacts are provided by H67, H107, E142, D176, H179, H211, D224, H226, and E256.

This sequence belongs to the AP endonuclease 2 family. The cofactor is Zn(2+).

The enzyme catalyses Endonucleolytic cleavage to 5'-phosphooligonucleotide end-products.. In terms of biological role, endonuclease IV plays a role in DNA repair. It cleaves phosphodiester bonds at apurinic or apyrimidinic (AP) sites, generating a 3'-hydroxyl group and a 5'-terminal sugar phosphate. This Alkaliphilus oremlandii (strain OhILAs) (Clostridium oremlandii (strain OhILAs)) protein is Probable endonuclease 4.